Reading from the N-terminus, the 621-residue chain is tRNA uridine 5-carboxymethylaminomethyl modification enzyme MnmG (621 aa).

Position 17–22 (17–22) interacts with FAD; sequence GGGHAG. 276–290 serves as a coordination point for NAD(+); that stretch reads GPRYCPSIEDKIMKF.

The protein belongs to the MnmG family. In terms of assembly, homodimer. Heterotetramer of two MnmE and two MnmG subunits. Requires FAD as cofactor.

Its subcellular location is the cytoplasm. Its function is as follows. NAD-binding protein involved in the addition of a carboxymethylaminomethyl (cmnm) group at the wobble position (U34) of certain tRNAs, forming tRNA-cmnm(5)s(2)U34. This is tRNA uridine 5-carboxymethylaminomethyl modification enzyme MnmG from Zymomonas mobilis subsp. mobilis (strain ATCC 31821 / ZM4 / CP4).